A 193-amino-acid polypeptide reads, in one-letter code: Adenine phosphoribosyltransferase (193 aa).

The protein belongs to the purine/pyrimidine phosphoribosyltransferase family. Homodimer.

The protein localises to the cytoplasm. It catalyses the reaction AMP + diphosphate = 5-phospho-alpha-D-ribose 1-diphosphate + adenine. Its pathway is purine metabolism; AMP biosynthesis via salvage pathway; AMP from adenine: step 1/1. In terms of biological role, catalyzes a salvage reaction resulting in the formation of AMP, that is energically less costly than de novo synthesis. This is Adenine phosphoribosyltransferase from Bifidobacterium longum subsp. infantis (strain ATCC 15697 / DSM 20088 / JCM 1222 / NCTC 11817 / S12).